We begin with the raw amino-acid sequence, 802 residues long: Copper-exporting P-type ATPase (802 aa).

2 consecutive HMA domains span residues 5–70 and 72–138; these read KKTT…YGVA and ETVE…YDAS. Residues Cys-16, Cys-19, Cys-83, and Cys-86 each contribute to the Cu(+) site. A run of 6 helical transmembrane segments spans residues 161–181, 192–212, 224–244, 256–276, 411–431, and 438–458; these read LIIS…HLFN, WFQF…FYVG, MDVL…YEMV, LYFE…YLEA, YFVP…ITLV, and PALV…LGLA. The active-site 4-aspartylphosphate intermediate is Asp-495. The Mg(2+) site is built by Asp-690 and Asp-694. The next 2 membrane-spanning stretches (helical) occupy residues 748 to 767 and 771 to 790; these read LFWA…LGLL and VAGA…ALRL.

The protein belongs to the cation transport ATPase (P-type) (TC 3.A.3) family. Type IB subfamily.

It is found in the cell membrane. It catalyses the reaction Cu(+)(in) + ATP + H2O = Cu(+)(out) + ADP + phosphate + H(+). Functionally, involved in copper export. The chain is Copper-exporting P-type ATPase (copA) from Staphylococcus aureus (strain COL).